A 76-amino-acid polypeptide reads, in one-letter code: Accessory gland-specific peptide 57Dc (76 aa).

The first 20 residues, 1–20, serve as a signal peptide directing secretion; the sequence is MHGTHFLILLLLCGVLGSNG.

In terms of processing, cAMP-dependent phosphorylation. As to expression, lumen fluid of male accessory glands, becomes seminal fluid.

It is found in the secreted. Transferred from male to female during mating and may affect egglaying and behavior after mating. The polypeptide is Accessory gland-specific peptide 57Dc (Mst57Dc) (Drosophila melanogaster (Fruit fly)).